A 432-amino-acid polypeptide reads, in one-letter code: Phosphomethylpyrimidine synthase (432 aa).

Substrate is bound by residues asparagine 66, methionine 95, tyrosine 124, histidine 163, 185–187 (SRG), 226–229 (DGLR), and glutamate 265. Histidine 269 is a Zn(2+) binding site. Residue tyrosine 292 coordinates substrate. Histidine 333 is a binding site for Zn(2+). 3 residues coordinate [4Fe-4S] cluster: cysteine 409, cysteine 412, and cysteine 416.

This sequence belongs to the ThiC family. It depends on [4Fe-4S] cluster as a cofactor.

It catalyses the reaction 5-amino-1-(5-phospho-beta-D-ribosyl)imidazole + S-adenosyl-L-methionine = 4-amino-2-methyl-5-(phosphooxymethyl)pyrimidine + CO + 5'-deoxyadenosine + formate + L-methionine + 3 H(+). It participates in cofactor biosynthesis; thiamine diphosphate biosynthesis. In terms of biological role, catalyzes the synthesis of the hydroxymethylpyrimidine phosphate (HMP-P) moiety of thiamine from aminoimidazole ribotide (AIR) in a radical S-adenosyl-L-methionine (SAM)-dependent reaction. The protein is Phosphomethylpyrimidine synthase of Desulfitobacterium hafniense (strain DSM 10664 / DCB-2).